A 334-amino-acid polypeptide reads, in one-letter code: Ornithine carbamoyltransferase (334 aa).

Carbamoyl phosphate contacts are provided by residues 56 to 59 (STRT), Gln83, Arg107, and 134 to 137 (HPTQ). Residues Asn168, Asp232, and 236 to 237 (SM) contribute to the L-ornithine site. Carbamoyl phosphate-binding positions include 274 to 275 (CL) and Arg320.

This sequence belongs to the aspartate/ornithine carbamoyltransferase superfamily. OTCase family.

The protein resides in the cytoplasm. It carries out the reaction carbamoyl phosphate + L-ornithine = L-citrulline + phosphate + H(+). Its pathway is amino-acid biosynthesis; L-arginine biosynthesis; L-arginine from L-ornithine and carbamoyl phosphate: step 1/3. Its function is as follows. Reversibly catalyzes the transfer of the carbamoyl group from carbamoyl phosphate (CP) to the N(epsilon) atom of ornithine (ORN) to produce L-citrulline. This is Ornithine carbamoyltransferase from Escherichia coli O157:H7.